A 349-amino-acid chain; its full sequence is S-adenosylmethionine:tRNA ribosyltransferase-isomerase (349 aa).

Belongs to the QueA family. In terms of assembly, monomer.

Its subcellular location is the cytoplasm. It carries out the reaction 7-aminomethyl-7-carbaguanosine(34) in tRNA + S-adenosyl-L-methionine = epoxyqueuosine(34) in tRNA + adenine + L-methionine + 2 H(+). It functions in the pathway tRNA modification; tRNA-queuosine biosynthesis. Transfers and isomerizes the ribose moiety from AdoMet to the 7-aminomethyl group of 7-deazaguanine (preQ1-tRNA) to give epoxyqueuosine (oQ-tRNA). The sequence is that of S-adenosylmethionine:tRNA ribosyltransferase-isomerase from Azotobacter vinelandii (strain DJ / ATCC BAA-1303).